The primary structure comprises 486 residues: MDSAERPLRIPPEMVIYAEKHDIFHLIQTLVRNLMVDKPDDPIQYLINFLERDNVDVPRIILLGPPASGKKTVAKKLCEHTQAIHITFCDILKDDSDLTRAAQSYYDKKQNVPKDLWIQLIQQRLSKPDCVQRGWVLEAIPKTQDEALCLQEAGITPDHVVMLEAPDVVLIERSSGKRIDPVTGDVYHVTFMWPESEEVAQRLETPRTLMPVQVMSQKLQKYHTEAHALKRTYHNCLKIINADQPHVDVFSQVLNFICTPRHSPSPYTPRILLFGPPGAGRNLQAKLIAQKYGIINICCGELLKAVSADESHMGELIKPYLESEQQVPSSIVLRVLTERLSRMDCTARGWVLHGFPRDVEEAELLHKSNFTPNRVFFLEITDDIAIERLALRAVDPVTGEWYHSVYKPPPGPEVQARLRFNPQHSEAQLLMRLKEYWSQTVRLQAFYPQAVYINADQDPHTVFESLESRLVGQLPKVLSNQQTNEN.

Adenylate kinase stretches follow at residues 58-258 (PRII…NFIC) and 269-471 (PRIL…SRLV). Position 67–72 (67–72 (ASGKKT)) interacts with ATP. The segment at 87–112 (TFCDILKDDSDLTRAAQSYYDKKQNV) is NMP 1. AMP is bound by residues 139-142 (AIPK) and arginine 202. Positions 176–205 (GKRIDPVTGDVYHVTFMWPESEEVAQRLET) are LID 1. 278-283 (GAGRNL) lines the ATP pocket. An NMP 2 region spans residues 298-327 (CCGELLKAVSADESHMGELIKPYLESEQQV). AMP contacts are provided by residues 325–327 (QQV) and 354–357 (GFPR). Residues 391-424 (LRAVDPVTGEWYHSVYKPPPGPEVQARLRFNPQH) are LID 2. An ATP-binding site is contributed by arginine 392. Residue arginine 432 participates in AMP binding.

It belongs to the adenylate kinase family.

The protein localises to the cytoplasm. It localises to the cytosol. The enzyme catalyses AMP + ATP = 2 ADP. It carries out the reaction a 2'-deoxyribonucleoside 5'-diphosphate + ATP = a 2'-deoxyribonucleoside 5'-triphosphate + ADP. The catalysed reaction is a ribonucleoside 5'-diphosphate + ATP = a ribonucleoside 5'-triphosphate + ADP. Functionally, nucleoside monophosphate (NMP) kinase that catalyzes the reversible transfer of the terminal phosphate group between nucleoside triphosphates and monophosphates. Has highest activity toward AMP, and weaker activity toward dAMP, CMP and dCMP. Also displays broad nucleoside diphosphate kinase activity. The sequence is that of Adenylate kinase 8 (ak8) from Danio rerio (Zebrafish).